Reading from the N-terminus, the 107-residue chain is Nucleoid-associated protein Oant_0022 (107 aa).

Belongs to the YbaB/EbfC family. In terms of assembly, homodimer.

It is found in the cytoplasm. It localises to the nucleoid. Its function is as follows. Binds to DNA and alters its conformation. May be involved in regulation of gene expression, nucleoid organization and DNA protection. The protein is Nucleoid-associated protein Oant_0022 of Brucella anthropi (strain ATCC 49188 / DSM 6882 / CCUG 24695 / JCM 21032 / LMG 3331 / NBRC 15819 / NCTC 12168 / Alc 37) (Ochrobactrum anthropi).